The following is a 205-amino-acid chain: Protein phosphatase inhibitor 2 family member C (205 aa).

Disordered stretches follow at residues 1–51 (MSAS…DESS) and 70–114 (EPGT…DHSC). A required for binding PPP1CC region spans residues 12 to 17 (KGILKN). Positions 19-34 (SSSGSSVATSGQQSGG) are enriched in low complexity. Positions 43–55 (KSQKWDESSILAT) are required for binding PPP1CC. Positions 84–102 (DSVRDVEGEDSVRGVEGKE) are enriched in basic and acidic residues. The required for binding PPP1CC catalytic center, displacing metal ions and inhibition of PPP1CC catalytic activity stretch occupies residues 147 to 150 (HYNE). Residues 165-205 (LQSEDDENEERPQATNEEKTAAEESEEAPLSGGLQTQSCDP) are disordered. Residues 174–186 (ERPQATNEEKTAA) show a composition bias toward basic and acidic residues.

Belongs to the protein phosphatase inhibitor 2 family.

Its function is as follows. Functions as a protein phosphatase inhibitor. It inhibits activity of the catalytic subunit of PP1 and weakly inhibits the activity of myosin-associated phosphates. This Macaca fascicularis (Crab-eating macaque) protein is Protein phosphatase inhibitor 2 family member C (PPP1R2C).